The following is a 215-amino-acid chain: MSEAKRLAAEKAIDYVEDGMIVGVGTGSTVAYFIDALGRIGHRIKGAVSSSEQSTARLRQHGVEVLDLNHTGNLSLYVDGADECDPNRCLIKGGGAALTREKIIAEASERFICIVDPSKQVPVLGKFPLPVEVIPMARSLVARQILALTGGQPVWRDGVVTDNGNVVLDVHHLQITDPVGLERSLNQIPGVVCVGLFARRPADVVIVGGEPPQVI.

Residues 26 to 29, 79 to 82, and 92 to 95 contribute to the substrate site; these read TGST, DGAD, and KGGG. Catalysis depends on E101, which acts as the Proton acceptor. Substrate is bound at residue K119.

Belongs to the ribose 5-phosphate isomerase family. Homodimer.

The enzyme catalyses aldehydo-D-ribose 5-phosphate = D-ribulose 5-phosphate. It functions in the pathway carbohydrate degradation; pentose phosphate pathway; D-ribose 5-phosphate from D-ribulose 5-phosphate (non-oxidative stage): step 1/1. In terms of biological role, catalyzes the reversible conversion of ribose-5-phosphate to ribulose 5-phosphate. The chain is Ribose-5-phosphate isomerase A from Xanthomonas euvesicatoria pv. vesicatoria (strain 85-10) (Xanthomonas campestris pv. vesicatoria).